The sequence spans 465 residues: Azaphilone cluster-specific transcription factor azaR (465 aa).

The span at 1-16 (MSDSRTTTTKNNTTNH) shows a compositional bias: low complexity. Residues 1–25 (MSDSRTTTTKNNTTNHKTSRQGPGS) form a disordered region. Residues 27-53 (CEECRRRKLRCDRQPQCQNCVDAGVYC) constitute a DNA-binding region (zn(2)-C6 fungal-type).

It localises to the nucleus. Transcription factor that regulates the expression of the gene cluster that mediates the biosynthesis of azaphilones, a class of fungal metabolites characterized by a highly oxygenated pyrano-quinone bicyclic core and exhibiting a broad range of bioactivities. This chain is Azaphilone cluster-specific transcription factor azaR, found in Aspergillus niger (strain ATCC 1015 / CBS 113.46 / FGSC A1144 / LSHB Ac4 / NCTC 3858a / NRRL 328 / USDA 3528.7).